The chain runs to 272 residues: Bis(5'-nucleosyl)-tetraphosphatase, symmetrical (272 aa).

The protein belongs to the Ap4A hydrolase family.

The enzyme catalyses P(1),P(4)-bis(5'-adenosyl) tetraphosphate + H2O = 2 ADP + 2 H(+). In terms of biological role, hydrolyzes diadenosine 5',5'''-P1,P4-tetraphosphate to yield ADP. The protein is Bis(5'-nucleosyl)-tetraphosphatase, symmetrical of Ectopseudomonas mendocina (strain ymp) (Pseudomonas mendocina).